Reading from the N-terminus, the 491-residue chain is Ribonuclease Y (491 aa).

The chain crosses the membrane as a helical span at residues 4–24 (LIATVGVVAVAALVIAIFVVI). Positions 181-247 (VVSVVHLPGD…RVALERLVDD (67 aa)) constitute a KH domain. The region spanning 307–400 (VLKHLVETAH…TQAADAISGG (94 aa)) is the HD domain.

Belongs to the RNase Y family.

The protein resides in the cell membrane. Its function is as follows. Endoribonuclease that initiates mRNA decay. The chain is Ribonuclease Y from Acidothermus cellulolyticus (strain ATCC 43068 / DSM 8971 / 11B).